The following is a 990-amino-acid chain: F-box/LRR-repeat protein 15 (990 aa).

One can recognise an F-box domain in the interval 190–236 (FEVHIDLTDDLLHMVFSFLNHVDLCRSAMVCRQWRVASAHEDFWRVL). LRR repeat units lie at residues 237 to 258 (NFEN…YPNA), 280 to 303 (LRNL…ALGE), 317 to 341 (LGNG…KCRV), 348 to 373 (CPQL…LLQL), 397 to 423 (LESL…CANL), 441 to 465 (LPML…WIAN), 466 to 477 (SPALEVLELDNC), 478 to 503 (NLLT…KFTD), 519 to 542 (CPAL…KQEN), 550 to 574 (CHSL…IFSD), 589 to 612 (CESL…GCRA), 614 to 633 (TSLE…GCDH), 640 to 652 (QPVA…LGIC), 653 to 678 (PKLS…VLSE), 734 to 756 (LPNL…VFKS), 758 to 782 (IQLK…LYKE), 785 to 809 (LPAL…LLAC), 813 to 839 (LTHL…LFDY), 882 to 893 (FYHLSTLNLSLS), 894 to 914 (VNLK…LSNC), 915 to 937 (CSLE…SCNM), and 949 to 973 (CSSL…KFRT).

The polypeptide is F-box/LRR-repeat protein 15 (FBL15) (Arabidopsis thaliana (Mouse-ear cress)).